The sequence spans 151 residues: UPAR/Ly6 domain-containing protein crok (151 aa).

The first 23 residues, 1 to 23 (MKTLEKYILFAIVLCCLLQLGQA), serve as a signal peptide directing secretion. Over 24-128 (IKCWDCRSDN…KDGCNSAGIH (105 aa)) the chain is Lumenal. 5 cysteine pairs are disulfide-bonded: Cys26-Cys68, Cys29-Cys37, Cys51-Cys85, Cys100-Cys114, and Cys116-Cys122. Asn43 is a glycosylation site (N-linked (GlcNAc...) asparagine). Ser124 is lipidated: GPI-anchor amidated serine. Positions 125 to 151 (AGIHRLGLMGVLTGTLLSVIVAHLLRQ) are cleaved as a propeptide — removed in mature form. Residues 129–149 (RLGLMGVLTGTLLSVIVAHLL) traverse the membrane as a helical segment. The Cytoplasmic segment spans residues 150–151 (RQ).

The protein belongs to the quiver family.

It is found in the vesicle. Its subcellular location is the membrane. It localises to the endomembrane system. Required for septate junction assembly, possibly by organizing the preassembly and transport of septate junction proteins including dlg1/disks large 1 and Nrx-IV/Neurexin-IV. Involved in paracellular barrier functions of trachea, hindgut and salivary gland mediated by epithelial cell septate junctions. This is UPAR/Ly6 domain-containing protein crok from Drosophila melanogaster (Fruit fly).